A 170-amino-acid chain; its full sequence is Inner membrane protein p22 (170 aa).

The Intravirion portion of the chain corresponds to Met1 to Thr3. Residues Leu4–Tyr24 form a helical membrane-spanning segment. Topologically, residues Tyr25–Ala170 are virion surface.

The protein belongs to the asfivirus inner membrane protein p22 family.

The protein resides in the virion membrane. The protein localises to the host cell membrane. This chain is Inner membrane protein p22, found in Ornithodoros (relapsing fever ticks).